A 2845-amino-acid chain; its full sequence is Multiple epidermal growth factor-like domains protein 8 (2845 aa).

The signal sequence occupies residues 1-27; it reads MALGKVLAMALVLALAVLGSLSPGARA. Topologically, residues 28–2647 are extracellular; that stretch reads GDCKGQRQVL…FFRQDQAHID (2620 aa). 6 cysteine pairs are disulfide-bonded: Cys30-Cys57, Cys142-Cys152, Cys146-Cys158, Cys174-Cys184, Cys178-Cys191, and Cys193-Cys202. A CUB 1 domain is found at 30–140; it reads CKGQRQVLRE…LGFNASFRFS (111 aa). An N-linked (GlcNAc...) asparagine glycan is attached at Asn50. 2 EGF-like domains span residues 138–168 and 170–203; these read RFSLCPGGCQSHGQCQPPGVCACEPGWGGPD and GLQECSAYCGSHGTCASPLGPCRCEPGFLGRACD. Asn217 is a glycosylation site (N-linked (GlcNAc...) asparagine). 6 Kelch repeats span residues 241-287, 290-338, 346-399, 402-453, 459-511, and 525-575; these read LLAV…AVAW, SLVL…AGHA, WLYV…FHAP, ALLV…FHTA, YMVV…APPS, and VLLV…SRDP. PSI domains are found at residues 561–613, 847–899, and 900–947; these read YCSM…GDCQ, SCTS…TLCP, and LCEE…EECP. N-linked (GlcNAc...) asparagine glycosylation occurs at Asn1048. The EGF-like 3; calcium-binding domain maps to 1074–1115; the sequence is DVDECRLGLARCHPRATCLNTPLSYECHCQRGYQGDGISHCN. Disulfide bonds link Cys1078–Cys1091, Cys1085–Cys1100, Cys1102–Cys1114, Cys1163–Cys1171, Cys1165–Cys1179, Cys1182–Cys1191, Cys1194–Cys1208, Cys1211–Cys1224, Cys1213–Cys1231, Cys1233–Cys1242, Cys1245–Cys1259, Cys1263–Cys1302, Cys1336–Cys1367, Cys1407–Cys1421, Cys1415–Cys1433, and Cys1435–Cys1444. 2 Laminin EGF-like domains span residues 1163-1210 and 1211-1261; these read CGCS…GCRP and CQCN…SCFR. The CUB 2 domain occupies 1263 to 1405; that stretch reads CGGRALLTNV…WGFNASVGSA (143 aa). Asn1271 carries N-linked (GlcNAc...) asparagine glycosylation. Thr1353 bears the Phosphothreonine mark. The EGF-like 4 domain maps to 1403–1445; the sequence is GSARCGSGGPGSCPVPQECVPQDGAAGAGLCRCPQGWAGPHCR. Kelch repeat units follow at residues 1522 to 1570, 1580 to 1626, 1632 to 1679, 1685 to 1735, 1796 to 1843, and 1852 to 1898; these read TLWM…SFHA, AMYL…HTLT, SLLL…SAVY, SLYV…VRGS, TMVV…ESVA, and RLYI…CHGA. Residues 1726–1745 form a disordered region; the sequence is RDRMRNVRGSSRGLGQVPGE. 4 PSI domains span residues 1876 to 1916, 1924 to 1979, 2060 to 2118, and 2120 to 2177; these read PCRL…SPCS, ECRR…NDCR, PCHL…ESCS, and GCAQ…LSCP. The N-linked (GlcNAc...) asparagine glycan is linked to Asn2066. In terms of domain architecture, EGF-like 5 spans 2178–2216; it reads PEDECANGHHDCNETQNCHDQPHGYECSCKTGYTMDNMT. 2 cysteine pairs are disulfide-bonded: Cys2182/Cys2195 and Cys2189/Cys2204. An N-linked (GlcNAc...) asparagine glycan is attached at Asn2229. 8 disulfides stabilise this stretch: Cys2253–Cys2261, Cys2255–Cys2270, Cys2273–Cys2282, Cys2285–Cys2299, Cys2380–Cys2389, Cys2382–Cys2397, Cys2399–Cys2424, and Cys2427–Cys2441. Laminin EGF-like domains lie at 2253–2301 and 2380–2443; these read CRCN…TCRP and CQCN…QCYR. Residues 2523-2564 form a disordered region; it reads TVHIQPPPAPPPPPPPADGGPRGAGDPGGAGASSGPGAPAEP. Residues 2527 to 2540 show a composition bias toward pro residues; it reads QPPPAPPPPPPPAD. Positions 2542–2556 are enriched in gly residues; sequence GPRGAGDPGGAGASS. A helical membrane pass occupies residues 2648-2668; it reads LFVFFSVFFSCFFLFLSLCVL. Over 2669–2845 the chain is Cytoplasmic; that stretch reads LWKAKQALDQ…SQDNLTSMSL (177 aa). Gly residues predominate over residues 2817 to 2831; sequence GGGAGGSGHGTGAGR. The segment at 2817 to 2845 is disordered; it reads GGGAGGSGHGTGAGRKGLLSQDNLTSMSL. The segment covering 2836–2845 has biased composition (polar residues); sequence SQDNLTSMSL.

Its subcellular location is the membrane. Acts as a negative regulator of hedgehog signaling. The polypeptide is Multiple epidermal growth factor-like domains protein 8 (MEGF8) (Homo sapiens (Human)).